Here is a 521-residue protein sequence, read N- to C-terminus: Protein nucleotidyltransferase YdiU (521 aa).

Residues Gly109, Gly111, Arg112, Lys131, Asp143, Gly144, Arg194, and Arg201 each coordinate ATP. Residue Asp270 is the Proton acceptor of the active site. 2 residues coordinate Mg(2+): Asn271 and Asp280. Asp280 serves as a coordination point for ATP.

The protein belongs to the SELO family. It depends on Mg(2+) as a cofactor. Mn(2+) serves as cofactor.

It catalyses the reaction L-seryl-[protein] + ATP = 3-O-(5'-adenylyl)-L-seryl-[protein] + diphosphate. The enzyme catalyses L-threonyl-[protein] + ATP = 3-O-(5'-adenylyl)-L-threonyl-[protein] + diphosphate. The catalysed reaction is L-tyrosyl-[protein] + ATP = O-(5'-adenylyl)-L-tyrosyl-[protein] + diphosphate. It carries out the reaction L-histidyl-[protein] + UTP = N(tele)-(5'-uridylyl)-L-histidyl-[protein] + diphosphate. It catalyses the reaction L-seryl-[protein] + UTP = O-(5'-uridylyl)-L-seryl-[protein] + diphosphate. The enzyme catalyses L-tyrosyl-[protein] + UTP = O-(5'-uridylyl)-L-tyrosyl-[protein] + diphosphate. Its function is as follows. Nucleotidyltransferase involved in the post-translational modification of proteins. It can catalyze the addition of adenosine monophosphate (AMP) or uridine monophosphate (UMP) to a protein, resulting in modifications known as AMPylation and UMPylation. The sequence is that of Protein nucleotidyltransferase YdiU from Burkholderia mallei (strain ATCC 23344).